The chain runs to 158 residues: uncharacterized protein (158 aa).

The disordered stretch occupies residues 77–132 (AIKRNKIGGSKRSEVHSNRSKNYSSKKFRSQKCRRSRQKKRQNKKPNNSRFISSNK). Residues 100–120 (SSKKFRSQKCRRSRQKKRQNK) are compositionally biased toward basic residues.

This is an uncharacterized protein from Acanthamoeba polyphaga mimivirus (APMV).